The primary structure comprises 185 residues: HTH-type transcriptional regulator SAB2452 (185 aa).

The HTH tetR-type domain maps to 6–66 (IENRQRIEEI…YVIQRDLNTF (61 aa)). Residues 29 to 48 (SMNRIAKELGIGMGTLYRHF) constitute a DNA-binding region (H-T-H motif).

The sequence is that of HTH-type transcriptional regulator SAB2452 from Staphylococcus aureus (strain bovine RF122 / ET3-1).